The chain runs to 166 residues: Ribosome maturation factor RimM (166 aa).

Residues 94 to 166 (GDEYYWRDLM…EMVVRLLPGL (73 aa)) enclose the PRC barrel domain.

This sequence belongs to the RimM family. In terms of assembly, binds ribosomal protein uS19.

The protein resides in the cytoplasm. Its function is as follows. An accessory protein needed during the final step in the assembly of 30S ribosomal subunit, possibly for assembly of the head region. Essential for efficient processing of 16S rRNA. May be needed both before and after RbfA during the maturation of 16S rRNA. It has affinity for free ribosomal 30S subunits but not for 70S ribosomes. The polypeptide is Ribosome maturation factor RimM (Syntrophus aciditrophicus (strain SB)).